The primary structure comprises 70 residues: Protein SlyX homolog (70 aa).

The protein belongs to the SlyX family.

The chain is Protein SlyX homolog from Shewanella piezotolerans (strain WP3 / JCM 13877).